The following is a 458-amino-acid chain: Bifunctional protein GlmU (458 aa).

Residues 1-230 (MHKRTAVVLA…EREILGINSR (230 aa)) form a pyrophosphorylase region. UDP-N-acetyl-alpha-D-glucosamine is bound by residues 9-12 (LAAG), Lys-23, Gln-73, and 78-79 (GT). Asp-103 is a Mg(2+) binding site. Residues Gly-140, Glu-155, Asn-170, and Asn-228 each coordinate UDP-N-acetyl-alpha-D-glucosamine. Asn-228 serves as a coordination point for Mg(2+). Residues 231-251 (VQLAEAEAVLQDRLRRKWMDA) are linker. The N-acetyltransferase stretch occupies residues 252-458 (GVTLIDPPSV…FLGRKHKGSQ (207 aa)). UDP-N-acetyl-alpha-D-glucosamine-binding residues include Arg-333 and Lys-351. His-363 functions as the Proton acceptor in the catalytic mechanism. UDP-N-acetyl-alpha-D-glucosamine contacts are provided by Tyr-366 and Asn-377. Acetyl-CoA contacts are provided by residues Ala-380, 386-387 (NY), Ser-405, Ala-423, and Arg-440.

In the N-terminal section; belongs to the N-acetylglucosamine-1-phosphate uridyltransferase family. The protein in the C-terminal section; belongs to the transferase hexapeptide repeat family. In terms of assembly, homotrimer. Mg(2+) is required as a cofactor.

The protein localises to the cytoplasm. It catalyses the reaction alpha-D-glucosamine 1-phosphate + acetyl-CoA = N-acetyl-alpha-D-glucosamine 1-phosphate + CoA + H(+). It carries out the reaction N-acetyl-alpha-D-glucosamine 1-phosphate + UTP + H(+) = UDP-N-acetyl-alpha-D-glucosamine + diphosphate. It functions in the pathway nucleotide-sugar biosynthesis; UDP-N-acetyl-alpha-D-glucosamine biosynthesis; N-acetyl-alpha-D-glucosamine 1-phosphate from alpha-D-glucosamine 6-phosphate (route II): step 2/2. The protein operates within nucleotide-sugar biosynthesis; UDP-N-acetyl-alpha-D-glucosamine biosynthesis; UDP-N-acetyl-alpha-D-glucosamine from N-acetyl-alpha-D-glucosamine 1-phosphate: step 1/1. Its pathway is bacterial outer membrane biogenesis; LPS lipid A biosynthesis. In terms of biological role, catalyzes the last two sequential reactions in the de novo biosynthetic pathway for UDP-N-acetylglucosamine (UDP-GlcNAc). The C-terminal domain catalyzes the transfer of acetyl group from acetyl coenzyme A to glucosamine-1-phosphate (GlcN-1-P) to produce N-acetylglucosamine-1-phosphate (GlcNAc-1-P), which is converted into UDP-GlcNAc by the transfer of uridine 5-monophosphate (from uridine 5-triphosphate), a reaction catalyzed by the N-terminal domain. The chain is Bifunctional protein GlmU from Heliobacterium modesticaldum (strain ATCC 51547 / Ice1).